Consider the following 111-residue polypeptide: Large ribosomal subunit protein uL24 (111 aa).

Belongs to the universal ribosomal protein uL24 family. Part of the 50S ribosomal subunit.

Its function is as follows. One of two assembly initiator proteins, it binds directly to the 5'-end of the 23S rRNA, where it nucleates assembly of the 50S subunit. In terms of biological role, one of the proteins that surrounds the polypeptide exit tunnel on the outside of the subunit. In Chlamydia pneumoniae (Chlamydophila pneumoniae), this protein is Large ribosomal subunit protein uL24.